The following is a 269-amino-acid chain: 3-methyl-2-oxobutanoate hydroxymethyltransferase (269 aa).

Residues D51 and D90 each coordinate Mg(2+). Residues 51–52, D90, and K120 each bind 3-methyl-2-oxobutanoate; that span reads DS. A Mg(2+)-binding site is contributed by E122. E187 (proton acceptor) is an active-site residue.

Belongs to the PanB family. In terms of assembly, homodecamer; pentamer of dimers. The cofactor is Mg(2+).

It is found in the cytoplasm. The catalysed reaction is 3-methyl-2-oxobutanoate + (6R)-5,10-methylene-5,6,7,8-tetrahydrofolate + H2O = 2-dehydropantoate + (6S)-5,6,7,8-tetrahydrofolate. The protein operates within cofactor biosynthesis; (R)-pantothenate biosynthesis; (R)-pantoate from 3-methyl-2-oxobutanoate: step 1/2. Its function is as follows. Catalyzes the reversible reaction in which hydroxymethyl group from 5,10-methylenetetrahydrofolate is transferred onto alpha-ketoisovalerate to form ketopantoate. This is 3-methyl-2-oxobutanoate hydroxymethyltransferase from Tropheryma whipplei (strain TW08/27) (Whipple's bacillus).